The chain runs to 227 residues: Small heat shock protein hspG3 (227 aa).

The 197-residue stretch at 31-227 (NKRVDIIPSM…SSNTIKININ (197 aa)) folds into the sHSP domain. Residues 119 to 164 (QQQQLENSNKENDEPSIEEFEEDVKSKSELNKTTLNTTENKDEDKT) form a disordered region.

Belongs to the small heat shock protein (HSP20) family.

The chain is Small heat shock protein hspG3 (hspG3) from Dictyostelium discoideum (Social amoeba).